A 119-amino-acid polypeptide reads, in one-letter code: Acidic phospholipase A2 E (119 aa).

Disulfide bonds link Cys-11–Cys-71, Cys-26–Cys-118, Cys-28–Cys-44, Cys-43–Cys-99, Cys-50–Cys-92, Cys-60–Cys-85, and Cys-78–Cys-90. Residues Tyr-27, Gly-29, and Gly-31 each coordinate Ca(2+). His-47 is an active-site residue. Asp-48 contributes to the Ca(2+) binding site. Asp-93 is an active-site residue.

This sequence belongs to the phospholipase A2 family. Group I subfamily. D49 sub-subfamily. Requires Ca(2+) as cofactor. In terms of tissue distribution, expressed by the venom gland.

The protein resides in the secreted. The catalysed reaction is a 1,2-diacyl-sn-glycero-3-phosphocholine + H2O = a 1-acyl-sn-glycero-3-phosphocholine + a fatty acid + H(+). Functionally, PLA2 catalyzes the calcium-dependent hydrolysis of the 2-acyl groups in 3-sn-phosphoglycerides. This Naja oxiana (Central Asian cobra) protein is Acidic phospholipase A2 E.